A 387-amino-acid polypeptide reads, in one-letter code: Succinate--CoA ligase [ADP-forming] subunit beta (387 aa).

The 235-residue stretch at 9-243 (KEILSTYGIP…YSQLDPLEIT (235 aa)) folds into the ATP-grasp domain. Residues Lys-45, 52–54 (GRG), Glu-98, Val-101, and Glu-106 contribute to the ATP site. Mg(2+) is bound by residues Asn-198 and Asp-212. Substrate-binding positions include Asn-263 and 320–322 (GIM).

This sequence belongs to the succinate/malate CoA ligase beta subunit family. In terms of assembly, heterotetramer of two alpha and two beta subunits. Mg(2+) is required as a cofactor.

The enzyme catalyses succinate + ATP + CoA = succinyl-CoA + ADP + phosphate. It catalyses the reaction GTP + succinate + CoA = succinyl-CoA + GDP + phosphate. It functions in the pathway carbohydrate metabolism; tricarboxylic acid cycle; succinate from succinyl-CoA (ligase route): step 1/1. Its function is as follows. Succinyl-CoA synthetase functions in the citric acid cycle (TCA), coupling the hydrolysis of succinyl-CoA to the synthesis of either ATP or GTP and thus represents the only step of substrate-level phosphorylation in the TCA. The beta subunit provides nucleotide specificity of the enzyme and binds the substrate succinate, while the binding sites for coenzyme A and phosphate are found in the alpha subunit. This chain is Succinate--CoA ligase [ADP-forming] subunit beta, found in Trichlorobacter lovleyi (strain ATCC BAA-1151 / DSM 17278 / SZ) (Geobacter lovleyi).